The following is a 212-amino-acid chain: ATP-dependent Clp protease proteolytic subunit (212 aa).

The Nucleophile role is filled by Ser-106. The active site involves His-131.

It belongs to the peptidase S14 family. In terms of assembly, fourteen ClpP subunits assemble into 2 heptameric rings which stack back to back to give a disk-like structure with a central cavity, resembling the structure of eukaryotic proteasomes.

Its subcellular location is the cytoplasm. It carries out the reaction Hydrolysis of proteins to small peptides in the presence of ATP and magnesium. alpha-casein is the usual test substrate. In the absence of ATP, only oligopeptides shorter than five residues are hydrolyzed (such as succinyl-Leu-Tyr-|-NHMec, and Leu-Tyr-Leu-|-Tyr-Trp, in which cleavage of the -Tyr-|-Leu- and -Tyr-|-Trp bonds also occurs).. In terms of biological role, cleaves peptides in various proteins in a process that requires ATP hydrolysis. Has a chymotrypsin-like activity. Plays a major role in the degradation of misfolded proteins. In Rhodopseudomonas palustris (strain HaA2), this protein is ATP-dependent Clp protease proteolytic subunit.